The primary structure comprises 381 residues: Na(+)/H(+) antiporter NhaA 1 (381 aa).

11 consecutive transmembrane segments (helical) span residues 18-38, 53-73, 89-109, 118-138, 147-167, 170-190, 210-230, 251-271, 283-303, 321-341, and 348-368; these read GLLL…SYSA, ITHW…GLEL, SLPI…FLAL, GAGI…SLLG, VFLT…IAVF, TSIG…LFVL, YFML…AFVI, PVAF…AIES, FGII…FSSI, ILGA…ITLL, and IIVF…ITGF.

This sequence belongs to the NhaA Na(+)/H(+) (TC 2.A.33) antiporter family.

Its subcellular location is the cell inner membrane. It carries out the reaction Na(+)(in) + 2 H(+)(out) = Na(+)(out) + 2 H(+)(in). In terms of biological role, na(+)/H(+) antiporter that extrudes sodium in exchange for external protons. This Flavobacterium johnsoniae (strain ATCC 17061 / DSM 2064 / JCM 8514 / BCRC 14874 / CCUG 350202 / NBRC 14942 / NCIMB 11054 / UW101) (Cytophaga johnsonae) protein is Na(+)/H(+) antiporter NhaA 1.